The chain runs to 303 residues: HTH-type transcriptional regulator LysG (303 aa).

One can recognise an HTH lysR-type domain in the interval 6 to 62; it reads LDGPQLAALAAVVELGSFDAAAERLHVTPSAVSQRIKSLEQQVGQVLVVREKPCRAT. The segment at residues 23–42 is a DNA-binding region (H-T-H motif); that stretch reads FDAAAERLHVTPSAVSQRIK.

It belongs to the LysR transcriptional regulatory family. As to quaternary structure, homodimer.

Positively regulates the expression of the exporter LysE and represses its own expression. In Mycobacterium bovis (strain ATCC BAA-935 / AF2122/97), this protein is HTH-type transcriptional regulator LysG.